The primary structure comprises 371 residues: UDP-N-acetylglucosamine--N-acetylmuramyl-(pentapeptide) pyrophosphoryl-undecaprenol N-acetylglucosamine transferase (371 aa).

UDP-N-acetyl-alpha-D-glucosamine-binding positions include 15-17 (TGG), N126, R172, S199, I256, 275-280 (ALTVSE), and Q301.

The protein belongs to the glycosyltransferase 28 family. MurG subfamily.

It is found in the cell inner membrane. It carries out the reaction di-trans,octa-cis-undecaprenyl diphospho-N-acetyl-alpha-D-muramoyl-L-alanyl-D-glutamyl-meso-2,6-diaminopimeloyl-D-alanyl-D-alanine + UDP-N-acetyl-alpha-D-glucosamine = di-trans,octa-cis-undecaprenyl diphospho-[N-acetyl-alpha-D-glucosaminyl-(1-&gt;4)]-N-acetyl-alpha-D-muramoyl-L-alanyl-D-glutamyl-meso-2,6-diaminopimeloyl-D-alanyl-D-alanine + UDP + H(+). It functions in the pathway cell wall biogenesis; peptidoglycan biosynthesis. Cell wall formation. Catalyzes the transfer of a GlcNAc subunit on undecaprenyl-pyrophosphoryl-MurNAc-pentapeptide (lipid intermediate I) to form undecaprenyl-pyrophosphoryl-MurNAc-(pentapeptide)GlcNAc (lipid intermediate II). The polypeptide is UDP-N-acetylglucosamine--N-acetylmuramyl-(pentapeptide) pyrophosphoryl-undecaprenol N-acetylglucosamine transferase (Francisella tularensis subsp. tularensis (strain WY96-3418)).